The following is a 927-amino-acid chain: Protein unc-45 homolog B (927 aa).

TPR repeat units lie at residues 4-37, 41-74, and 76-108; these read PVQL…ITDK, AVLY…DASD, and KALF…EPKN. ARM repeat units follow at residues 167 to 206, 209 to 248, and 746 to 785; these read DAGA…GMCT, RARA…NIVD, and DKLR…NLAV.

It localises to the cytoplasm. It is found in the myofibril. The protein localises to the sarcomere. Its subcellular location is the z line. The protein resides in the a band. It localises to the perinuclear region. It is found in the cytosol. Acts as a co-chaperone for HSP90 and is required for proper folding of the myosin motor domain. Plays a role in sarcomere formation during muscle cell assembly. Is necessary for normal early lens development. This Xenopus laevis (African clawed frog) protein is Protein unc-45 homolog B.